The following is a 476-amino-acid chain: mRNA cap guanine-N(7) methyltransferase (476 aa).

Over residues Met-1–Ser-14 the composition is skewed to basic and acidic residues. The interval Met-1–Lys-128 is disordered. Polar residues predominate over residues Ala-20–Cys-50. 3 positions are modified to phosphoserine: Ser-24, Ser-28, and Ser-29. Basic and acidic residues-rich tracts occupy residues Asp-54–Lys-68, Leu-84–Lys-93, and Arg-107–Tyr-117. Phosphoserine is present on Ser-118. The short motif at Lys-126–Lys-128 is the Nuclear localization signal element. Residues Ser-167–Gln-475 enclose the mRNA cap 0 methyltransferase domain. Asn-176–Asn-177 contacts mRNA. Residues Lys-180, Gly-205, Asp-227, Asp-261, Gln-284, and Tyr-289 each contribute to the S-adenosyl-L-methionine site.

It belongs to the class I-like SAM-binding methyltransferase superfamily. mRNA cap 0 methyltransferase family. As to quaternary structure, interacts with importin alpha, leading to stimulate both RNA-binding and methyltransferase activity. Interaction with importin alpha and beta is required for its nuclear localization, importin beta dissociating in response to RanGTP, allowing RNMT-importin alpha to bind RNA substrates. Interacts with elongating form of polymerase II and RNGTT. Interacts with RAMAC, this interaction significantly enhances RNA-binding and cap methyltransferase activity.

The protein localises to the nucleus. The catalysed reaction is a 5'-end (5'-triphosphoguanosine)-ribonucleoside in mRNA + S-adenosyl-L-methionine = a 5'-end (N(7)-methyl 5'-triphosphoguanosine)-ribonucleoside in mRNA + S-adenosyl-L-homocysteine. Its activity is regulated as follows. Methyltransferase activity is activated by RAMAC. Catalytic subunit of the mRNA-capping methyltransferase RNMT:RAMAC complex that methylates the N7 position of the added guanosine to the 5'-cap structure of mRNAs. Binds RNA containing 5'-terminal GpppC. The sequence is that of mRNA cap guanine-N(7) methyltransferase (RNMT) from Macaca fascicularis (Crab-eating macaque).